The primary structure comprises 183 residues: Adenine phosphoribosyltransferase (183 aa).

This sequence belongs to the purine/pyrimidine phosphoribosyltransferase family. As to quaternary structure, homodimer.

It is found in the cytoplasm. It carries out the reaction AMP + diphosphate = 5-phospho-alpha-D-ribose 1-diphosphate + adenine. The protein operates within purine metabolism; AMP biosynthesis via salvage pathway; AMP from adenine: step 1/1. In terms of biological role, catalyzes a salvage reaction resulting in the formation of AMP, that is energically less costly than de novo synthesis. The protein is Adenine phosphoribosyltransferase of Sodalis glossinidius (strain morsitans).